Here is a 390-residue protein sequence, read N- to C-terminus: Aspergillopepsin-1 (390 aa).

Positions 1 to 19 (MVNTSLLAALTAYAVAVAA) are cleaved as a signal peptide. Positions 20–67 (APTAPQVKGFSVNQVAVPKGVYRHPAAQLAKAYGKYHATVPTQVAAAA) are cleaved as a propeptide — activation peptide. A Peptidase A1 domain is found at 84 to 387 (YITQVTVGDD…DASGPRLGFA (304 aa)). Residues Asp-100 and Asp-281 contribute to the active site.

This sequence belongs to the peptidase A1 family. As to quaternary structure, monomer.

The protein resides in the secreted. It catalyses the reaction Hydrolysis of proteins with broad specificity. Generally favors hydrophobic residues in P1 and P1', but also accepts Lys in P1, which leads to activation of trypsinogen. Does not clot milk.. Inhibited by the microbial peptide pepstatin A. Functionally, secreted aspartic endopeptidase that allows assimilation of proteinaceous substrates. The scissile peptide bond is attacked by a nucleophilic water molecule activated by two aspartic residues in the active site. Shows a broad primary substrate specificity. Favors hydrophobic residues at the P1 and P1' positions, but also accepts a lysine residue in the P1 position, leading to the activation of trypsinogen and chymotrypsinogen A. Hydrolyzes myoglobin, hemoglobin and other natural proteins. Hydrolyzes equine myoglobin between positions 'Met-1' and 'Gly-2', 'Lys-43' and 'Phe-44', and 'Leu-70' and 'Thr-71'. The protein is Aspergillopepsin-1 (pepA) of Aspergillus pseudoglaucus (Eurotium repens).